The sequence spans 335 residues: Beta-ketoacyl-[acyl-carrier-protein] synthase III (335 aa).

Residues Cys-119 and His-261 contribute to the active site. The tract at residues 262-266 (QANQR) is ACP-binding. Asn-291 is a catalytic residue.

Belongs to the thiolase-like superfamily. FabH family. Homodimer.

The protein resides in the cytoplasm. It carries out the reaction malonyl-[ACP] + acetyl-CoA + H(+) = 3-oxobutanoyl-[ACP] + CO2 + CoA. Its pathway is lipid metabolism; fatty acid biosynthesis. Functionally, catalyzes the condensation reaction of fatty acid synthesis by the addition to an acyl acceptor of two carbons from malonyl-ACP. Catalyzes the first condensation reaction which initiates fatty acid synthesis and may therefore play a role in governing the total rate of fatty acid production. Possesses both acetoacetyl-ACP synthase and acetyl transacylase activities. Its substrate specificity determines the biosynthesis of branched-chain and/or straight-chain of fatty acids. The polypeptide is Beta-ketoacyl-[acyl-carrier-protein] synthase III (Prochlorococcus marinus (strain MIT 9301)).